The chain runs to 1296 residues: Phosphoribosylformylglycinamidine synthase (1296 aa).

The segment at 304 to 323 (WPGAATGSGGEIRDEGATGR) is disordered. Residues 306 to 317 (GAATGSGGEIRD) and Ala677 contribute to the ATP site. Mg(2+) is bound by residues Asp678, Glu717, Asn721, and Asp885. ATP is bound at residue Ser887. Over residues 1000 to 1013 (PDCADQEHQAKQDE) the composition is skewed to basic and acidic residues. The segment at 1000–1019 (PDCADQEHQAKQDESDPGLN) is disordered. The region spanning 1043-1296 (VAVLREQGVN…MFRNARKQLG (254 aa)) is the Glutamine amidotransferase type-1 domain. The active-site Nucleophile is the Cys1136. Catalysis depends on residues His1261 and Glu1263.

It in the N-terminal section; belongs to the FGAMS family. Monomer.

Its subcellular location is the cytoplasm. It catalyses the reaction N(2)-formyl-N(1)-(5-phospho-beta-D-ribosyl)glycinamide + L-glutamine + ATP + H2O = 2-formamido-N(1)-(5-O-phospho-beta-D-ribosyl)acetamidine + L-glutamate + ADP + phosphate + H(+). The protein operates within purine metabolism; IMP biosynthesis via de novo pathway; 5-amino-1-(5-phospho-D-ribosyl)imidazole from N(2)-formyl-N(1)-(5-phospho-D-ribosyl)glycinamide: step 1/2. Phosphoribosylformylglycinamidine synthase involved in the purines biosynthetic pathway. Catalyzes the ATP-dependent conversion of formylglycinamide ribonucleotide (FGAR) and glutamine to yield formylglycinamidine ribonucleotide (FGAM) and glutamate. In Yersinia pestis bv. Antiqua (strain Antiqua), this protein is Phosphoribosylformylglycinamidine synthase.